Here is a 764-residue protein sequence, read N- to C-terminus: Bifunctional type I diterpene synthase tndC (764 aa).

Positions methionine 1–tyrosine 324 are terpene cyclase. Residues aspartate 92 and aspartate 96 each coordinate Mg(2+). Positions aspartate 92 to aspartate 96 match the DDXXD 1 motif. The short motif at asparagine 224 to glutamate 232 is the NSE/DTE element. Residues asparagine 325 to leucine 761 form a prenyltransferase region. Residues alanine 377–valine 403 form a disordered region. A compositionally biased stretch (polar residues) spans asparagine 381–glycine 391. Positions 484, 487, and 516 each coordinate isopentenyl diphosphate. Mg(2+) contacts are provided by aspartate 523 and aspartate 527. The DDXXD 2 signature appears at aspartate 523 to aspartate 527. Arginine 532 lines the dimethylallyl diphosphate pocket. Arginine 533 is an isopentenyl diphosphate binding site. Residues lysine 610, threonine 611, glutamine 646, asparagine 653, lysine 663, and lysine 673 each contribute to the dimethylallyl diphosphate site.

The protein in the N-terminal section; belongs to the terpene synthase family. In the C-terminal section; belongs to the FPP/GGPP synthase family.

The catalysed reaction is isopentenyl diphosphate + (2E,6E)-farnesyl diphosphate = (2E,6E,10E)-geranylgeranyl diphosphate + diphosphate. It catalyses the reaction (2E,6E,10E)-geranylgeranyl diphosphate = talarodiene + diphosphate. It participates in secondary metabolite biosynthesis; terpenoid biosynthesis. Its function is as follows. Bifunctional type I diterpene synthase; part of the gene cluster that mediates the biosynthesis of talaronoid C, a fusicoccane diterpenoid with an unprecedented tricyclic 5/8/6 ring system. The first step in the pathway is performed by the fusicoccadiene synthase tndC that possesses both prenyl transferase and terpene cyclase activity, converting isopentenyl diphosphate and dimethylallyl diphosphate into geranylgeranyl diphosphate (GGDP) and further converting GGDP into talarodiene, a precursor for talaronoid C. The remaining enzymes from the cluster include the cytochrome P450 monooxygenase tndB, the aldehyde reductase tndE and the alcohol dehydrogenase tndF that are involved in the conversion of talarodiene into talaronoid C. This is Bifunctional type I diterpene synthase tndC from Aspergillus flavipes.